Consider the following 544-residue polypeptide: L-aspartate oxidase (544 aa).

FAD-binding positions include 17-20 (SGGA), Lys-39, 46-53 (STFYAQGG), and Asp-221. Arg-288 (proton donor/acceptor) is an active-site residue. Residues Glu-373 and 389–390 (SL) each bind FAD.

This sequence belongs to the FAD-dependent oxidoreductase 2 family. NadB subfamily. It depends on FAD as a cofactor.

The protein resides in the cytoplasm. It catalyses the reaction L-aspartate + O2 = iminosuccinate + H2O2. It functions in the pathway cofactor biosynthesis; NAD(+) biosynthesis; iminoaspartate from L-aspartate (oxidase route): step 1/1. In terms of biological role, catalyzes the oxidation of L-aspartate to iminoaspartate, the first step in the de novo biosynthesis of NAD(+). This chain is L-aspartate oxidase, found in Acinetobacter baylyi (strain ATCC 33305 / BD413 / ADP1).